Here is a 428-residue protein sequence, read N- to C-terminus: MSAIVDIFAREILDSRGNPTVECDVLLESGVMGRAAVPSGASTGQKEALELRDGDKSRYSGKGVLKAVEHVNNQIAQALIGIDANEQSYIDQIMIELDGTENKGNLGANATLAVSMAVARAAAEDSGLPLYRYLGGAGPMSLPVPMMNVINGGEHANNSLNIQEFMIMPVGAKSFREALRCGAEIFHALKKLCDSKGFPTTVGDEGGFAPNLNSHKEALQLMVEAAEAAGYKAGEDVLFALDCASSEFYKDGKYHLEAEGRSYTNAEFAEYLEGLVNEFPIISIEDGMDENDWEGWKLLTEKLGKKVQLVGDDLFVTNPKILAEGIEKGVANALLVKVNQIGTLSETLKAVDLAKCNRYASVMSHRSGETEDSTIADLAVATNCMQIKTGSLSRSDRMAKYNQLLRIEEELAEAAYYPGKAAFYQLGK.

Q163 is a (2R)-2-phosphoglycerate binding site. The active-site Proton donor is the E205. Mg(2+) is bound by residues D242, E285, and D312. The (2R)-2-phosphoglycerate site is built by K337, R366, S367, and K388. The Proton acceptor role is filled by K337.

The protein belongs to the enolase family. Mg(2+) serves as cofactor.

It is found in the cytoplasm. Its subcellular location is the secreted. It localises to the cell surface. It catalyses the reaction (2R)-2-phosphoglycerate = phosphoenolpyruvate + H2O. It functions in the pathway carbohydrate degradation; glycolysis; pyruvate from D-glyceraldehyde 3-phosphate: step 4/5. Its function is as follows. Catalyzes the reversible conversion of 2-phosphoglycerate (2-PG) into phosphoenolpyruvate (PEP). It is essential for the degradation of carbohydrates via glycolysis. The chain is Enolase from Neisseria gonorrhoeae (strain ATCC 700825 / FA 1090).